Here is a 446-residue protein sequence, read N- to C-terminus: Deoxyguanosinetriphosphate triphosphohydrolase-like protein (446 aa).

Residues Met-1–Asp-28 are disordered. Positions Gln-7–Asp-28 are enriched in basic and acidic residues. The HD domain occupies Arg-59–Ala-252.

The protein belongs to the dGTPase family. Type 2 subfamily.

The protein is Deoxyguanosinetriphosphate triphosphohydrolase-like protein of Shewanella sp. (strain MR-7).